Consider the following 297-residue polypeptide: Succinate dehydrogenase [ubiquinone] iron-sulfur subunit, mitochondrial (297 aa).

The 94-residue stretch at 47–140 folds into the 2Fe-2S ferredoxin-type domain; that stretch reads KKFEIYRWNP…SLKVYPLPHM (94 aa). The [2Fe-2S] cluster site is built by cysteine 100, cysteine 105, cysteine 108, and cysteine 120. The 4Fe-4S ferredoxin-type domain occupies 185 to 215; the sequence is DRSKLDGLYECILCACCSTSCPSYWWNAEKY. [4Fe-4S] cluster-binding residues include cysteine 195, cysteine 198, and cysteine 201. Cysteine 205 serves as a coordination point for [3Fe-4S] cluster. Tryptophan 210 lines the a ubiquinone pocket. [3Fe-4S] cluster contacts are provided by cysteine 252 and cysteine 258. Cysteine 262 lines the [4Fe-4S] cluster pocket.

This sequence belongs to the succinate dehydrogenase/fumarate reductase iron-sulfur protein family. Component of complex II composed of four subunits: a flavoprotein (FP), an iron-sulfur protein (IP), and a cytochrome b composed of a large and a small subunit. The cofactor is [2Fe-2S] cluster. Requires [3Fe-4S] cluster as cofactor. [4Fe-4S] cluster serves as cofactor. Most abundant in the adult thorax and low in abdominal tissues.

It localises to the mitochondrion inner membrane. The catalysed reaction is a quinone + succinate = fumarate + a quinol. It functions in the pathway carbohydrate metabolism; tricarboxylic acid cycle; fumarate from succinate (eukaryal route): step 1/1. Functionally, iron-sulfur protein (IP) subunit of succinate dehydrogenase (SDH) that is involved in complex II of the mitochondrial electron transport chain and is responsible for transferring electrons from succinate to ubiquinone (coenzyme Q). This is Succinate dehydrogenase [ubiquinone] iron-sulfur subunit, mitochondrial (SdhB) from Drosophila melanogaster (Fruit fly).